We begin with the raw amino-acid sequence, 279 residues long: Ribosomal RNA large subunit methyltransferase E (279 aa).

Positions 1 to 10 are enriched in basic and acidic residues; the sequence is MSDDDQKPED. Residues 1–66 form a disordered region; the sequence is MSDDDQKPED…MKKGGDARAA (66 aa). S-adenosyl-L-methionine is bound by residues glycine 136, tryptophan 138, aspartate 154, aspartate 170, and aspartate 194. The active-site Proton acceptor is the lysine 234.

The protein belongs to the class I-like SAM-binding methyltransferase superfamily. RNA methyltransferase RlmE family.

The protein localises to the cytoplasm. The catalysed reaction is uridine(2552) in 23S rRNA + S-adenosyl-L-methionine = 2'-O-methyluridine(2552) in 23S rRNA + S-adenosyl-L-homocysteine + H(+). Functionally, specifically methylates the uridine in position 2552 of 23S rRNA at the 2'-O position of the ribose in the fully assembled 50S ribosomal subunit. The polypeptide is Ribosomal RNA large subunit methyltransferase E (Maricaulis maris (strain MCS10) (Caulobacter maris)).